Consider the following 230-residue polypeptide: Uracil-DNA glycosylase (230 aa).

The Proton acceptor role is filled by Asp71.

The protein belongs to the uracil-DNA glycosylase (UDG) superfamily. UNG family.

Its subcellular location is the cytoplasm. It catalyses the reaction Hydrolyzes single-stranded DNA or mismatched double-stranded DNA and polynucleotides, releasing free uracil.. Its function is as follows. Excises uracil residues from the DNA which can arise as a result of misincorporation of dUMP residues by DNA polymerase or due to deamination of cytosine. In Tropheryma whipplei (strain TW08/27) (Whipple's bacillus), this protein is Uracil-DNA glycosylase.